Reading from the N-terminus, the 56-residue chain is FAAVSVDCSEYPKPACTLEYRPLCGSDNKTYANKCNFCNAVVESNGTLTLSHFGKC.

Residues 6 to 56 (VDCSEYPKPACTLEYRPLCGSDNKTYANKCNFCNAVVESNGTLTLSHFGKC) form the Kazal-like domain. Intrachain disulfides connect Cys-8/Cys-38, Cys-16/Cys-35, and Cys-24/Cys-56. Asn-45 is a glycosylation site (N-linked (GlcNAc...) asparagine).

The protein resides in the secreted. This chain is Ovomucoid, found in Callipepla californica (California quail).